A 466-amino-acid chain; its full sequence is Soluble pyridine nucleotide transhydrogenase (466 aa).

Glutamate 36–cysteine 45 lines the FAD pocket.

Belongs to the class-I pyridine nucleotide-disulfide oxidoreductase family. The cofactor is FAD.

The protein resides in the cytoplasm. The catalysed reaction is NAD(+) + NADPH = NADH + NADP(+). Its function is as follows. Conversion of NADPH, generated by peripheral catabolic pathways, to NADH, which can enter the respiratory chain for energy generation. This chain is Soluble pyridine nucleotide transhydrogenase, found in Escherichia coli O6:K15:H31 (strain 536 / UPEC).